The primary structure comprises 118 residues: Late cornified envelope protein 1B (118 aa).

The tract at residues 87–118 is disordered; it reads CHRPQSSGCCSQPSGGSSCCGGGSGQHSGGCC. Positions 90 to 103 are enriched in low complexity; that stretch reads PQSSGCCSQPSGGS. Gly residues predominate over residues 104–118; sequence SCCGGGSGQHSGGCC.

It belongs to the LCE family. In terms of assembly, interacts with CYSRT1; the interaction is direct. As to expression, skin-specific. Expression was readily detected in adult trunk skin, adult arm skin, fetal skin, penal skin, vulva, esophagus and tongue. Not expressed in the cervix, rectum, lung, colon, or placenta.

Its function is as follows. Precursors of the cornified envelope of the stratum corneum. In Homo sapiens (Human), this protein is Late cornified envelope protein 1B (LCE1B).